The chain runs to 549 residues: Membrane protein insertase YidC (549 aa).

A helical membrane pass occupies residues 9-29; the sequence is LRLILAIALSFLFIALYSYFF. Residues 37 to 51 are compositionally biased toward low complexity; sequence TETTKQETTNNHTAT. The tract at residues 37–56 is disordered; the sequence is TETTKQETTNNHTATSPTAS. 5 helical membrane passes run 328-348, 351-371, 417-437, 452-472, and 498-518; these read VIEY…LDYL, FVGN…IILY, GANP…FFAI, WVLW…PLLM, and LLPL…VLYW.

It belongs to the OXA1/ALB3/YidC family. Type 1 subfamily. As to quaternary structure, interacts with the Sec translocase complex via SecD. Specifically interacts with transmembrane segments of nascent integral membrane proteins during membrane integration.

The protein localises to the cell inner membrane. In terms of biological role, required for the insertion and/or proper folding and/or complex formation of integral membrane proteins into the membrane. Involved in integration of membrane proteins that insert both dependently and independently of the Sec translocase complex, as well as at least some lipoproteins. Aids folding of multispanning membrane proteins. In Helicobacter pylori (strain J99 / ATCC 700824) (Campylobacter pylori J99), this protein is Membrane protein insertase YidC.